We begin with the raw amino-acid sequence, 790 residues long: Phenylalanine--tRNA ligase beta subunit (790 aa).

Residues 40-149 (AEKVSGVVVG…IDAPVGTDIN (110 aa)) enclose the tRNA-binding domain. The 78-residue stretch at 402 to 479 (NKQIKINLSI…RIYGYSKLPE (78 aa)) folds into the B5 domain. Positions 457, 463, 466, and 467 each coordinate Mg(2+). Residues 698 to 789 (SKYPSVSRDI…LKTKFNIEQR (92 aa)) form the FDX-ACB domain.

It belongs to the phenylalanyl-tRNA synthetase beta subunit family. Type 1 subfamily. As to quaternary structure, tetramer of two alpha and two beta subunits. Mg(2+) serves as cofactor.

Its subcellular location is the cytoplasm. The enzyme catalyses tRNA(Phe) + L-phenylalanine + ATP = L-phenylalanyl-tRNA(Phe) + AMP + diphosphate + H(+). In Francisella tularensis subsp. tularensis (strain SCHU S4 / Schu 4), this protein is Phenylalanine--tRNA ligase beta subunit.